The chain runs to 327 residues: MGSQDVKGDSYESVYNKILDMQSEPGGANDLRTNRQRSFNIENRYVEKALTQPGVVTKMQDAWTNWTKTNKEEGTPYNMSYSCVLLNVIPTVPMGYAGTVEVSLLDSGLSPLENVIPDQTQMMELGKGPHVMCFFMHYSIPLNDKGRAVKLAFKIDAEMASKGMSVMNVYSYWTQRQGHLSAYSEPQRSTISKLMLGYDKSLKMKTRNDVRRFVGRSLSLHNQEQSVPALLPGQINVMKENVPLYRKESVIDLTREEREKAAQLEMLRKTREVHTQRSAEEMKRRQAELAKDTQRKLAEEAKAVTEKRKNMAGVNSSNIKFGNFDSV.

Residues 252 to 311 (DLTREEREKAAQLEMLRKTREVHTQRSAEEMKRRQAELAKDTQRKLAEEAKAVTEKRKNM) are a coiled coil. 2 disordered regions span residues 271 to 294 (REVHTQRSAEEMKRRQAELAKDTQ) and 307 to 327 (KRKNMAGVNSSNIKFGNFDSV). Residues 313 to 327 (GVNSSNIKFGNFDSV) are compositionally biased toward polar residues.

It is found in the host cell wall. The protein localises to the host cytoplasm. Its function is as follows. Transports viral genome to neighboring plant cells directly through plasmosdesmata, without any budding. The movement protein allows efficient cell to cell propagation, by bypassing the host cell wall barrier. In Hordeum vulgare (Barley), this protein is Movement protein.